Consider the following 201-residue polypeptide: Holliday junction branch migration complex subunit RuvA (201 aa).

Residues 1–65 (MIAYIEGRVA…EDALELYGFS (65 aa)) are domain I. Residues 66–143 (GWDERQTFLV…KVESLPASAG (78 aa)) are domain II. Residues 143 to 147 (GLAAG) are flexible linker. The domain III stretch occupies residues 148–201 (VPGSVLRDAVQALGNLGYAEEEAAPVLKNILKQDPDLDVSEALRAALKALAKAR).

This sequence belongs to the RuvA family. In terms of assembly, homotetramer. Forms an RuvA(8)-RuvB(12)-Holliday junction (HJ) complex. HJ DNA is sandwiched between 2 RuvA tetramers; dsDNA enters through RuvA and exits via RuvB. An RuvB hexamer assembles on each DNA strand where it exits the tetramer. Each RuvB hexamer is contacted by two RuvA subunits (via domain III) on 2 adjacent RuvB subunits; this complex drives branch migration. In the full resolvosome a probable DNA-RuvA(4)-RuvB(12)-RuvC(2) complex forms which resolves the HJ.

The protein localises to the cytoplasm. Its function is as follows. The RuvA-RuvB-RuvC complex processes Holliday junction (HJ) DNA during genetic recombination and DNA repair, while the RuvA-RuvB complex plays an important role in the rescue of blocked DNA replication forks via replication fork reversal (RFR). RuvA specifically binds to HJ cruciform DNA, conferring on it an open structure. The RuvB hexamer acts as an ATP-dependent pump, pulling dsDNA into and through the RuvAB complex. HJ branch migration allows RuvC to scan DNA until it finds its consensus sequence, where it cleaves and resolves the cruciform DNA. This is Holliday junction branch migration complex subunit RuvA from Oleidesulfovibrio alaskensis (strain ATCC BAA-1058 / DSM 17464 / G20) (Desulfovibrio alaskensis).